Consider the following 404-residue polypeptide: 4-hydroxyphenylpyruvate dioxygenase (404 aa).

2 VOC domains span residues 28-163 (GYDH…FIQR) and 194-353 (YVDH…IFTK). The Fe cation site is built by H197, H280, and E364.

This sequence belongs to the 4HPPD family. The cofactor is Fe cation.

It carries out the reaction 3-(4-hydroxyphenyl)pyruvate + O2 = homogentisate + CO2. Its pathway is amino-acid degradation; L-phenylalanine degradation; acetoacetate and fumarate from L-phenylalanine: step 3/6. Functionally, key enzyme in the degradation of tyrosine. The sequence is that of 4-hydroxyphenylpyruvate dioxygenase (TFA) from Tetrahymena thermophila.